The primary structure comprises 226 residues: Glutathione S-transferase-like protein gedE (226 aa).

Positions leucine 4–histidine 85 constitute a GST N-terminal domain. Residues aspartate 92 to serine 226 form the GST C-terminal domain.

It belongs to the GST superfamily.

Its pathway is secondary metabolite biosynthesis. In terms of biological role, glutathione S-transferase-like protein; part of the gene cluster that mediates the biosynthesis of geodin, an intermediate in the biosynthesis of other natural products. The pathway begins with the synthesis of atrochrysone thioester by the polyketide synthase (PKS) gedC. The atrochrysone carboxyl ACP thioesterase gedB then breaks the thioester bond and releases the atrochrysone carboxylic acid from gedC. The atrochrysone carboxylic acid is then converted to atrochrysone which is further transformed into emodinanthrone. The next step is performed by the emodinanthrone oxygenase gedH that catalyzes the oxidation of emodinanthrone to emodin. Emodin O-methyltransferase encoded probably by gedA then catalyzes methylation of the 8-hydroxy group of emodin to form questin. Ring cleavage of questin by questin oxidase gedK leads to desmethylsulochrin via several intermediates including questin epoxide. Another methylation step probably catalyzed by methyltransferase gedG leads to the formation of sulochrin which is further converted to dihydrogeodin by the sulochrin halogenase gedL. Finally, the dihydrogeodin oxidase gedJ catalyzes the stereospecific phenol oxidative coupling reaction converting dihydrogeodin to geodin. In Aspergillus terreus (strain NIH 2624 / FGSC A1156), this protein is Glutathione S-transferase-like protein gedE.